We begin with the raw amino-acid sequence, 159 residues long: U1 small nuclear ribonucleoprotein C (159 aa).

A Matrin-type zinc finger spans residues 4–36 (FYCDYCDTYLTHDSPSVRKTHCSGRKHKENVKD). Phosphotyrosine is present on Y8. S17 is subject to Phosphoserine. N6-acetyllysine is present on K52. A disordered region spans residues 62-96 (IPPAPFSAPPPAGAMIPPPPSLPGPPRPGMMPAPH). The span at 63–92 (PPAPFSAPPPAGAMIPPPPSLPGPPRPGMM) shows a compositional bias: pro residues.

This sequence belongs to the U1 small nuclear ribonucleoprotein C family. In terms of assembly, component of the U1 snRNP. The U1 snRNP is composed of the U1 snRNA and the 7 core Sm proteins SNRPB, SNRPD1, SNRPD2, SNRPD3, SNRPE, SNRPF and SNRPG that assemble in a heptameric protein ring on the Sm site of the small nuclear RNA to form the core snRNP, and at least 3 U1 snRNP-specific proteins SNRNP70/U1-70K, SNRPA/U1-A and SNRPC/U1-C. SNRPC/U1-C interacts with U1 snRNA and the 5' splice-site region of the pre-mRNA. Interacts (via N-terminus) with TIA1 (via C-terminus); thereby promoting spliceosomal U1 snRNP recruitment to 5' splice sites.

It localises to the nucleus. Its function is as follows. Component of the spliceosomal U1 snRNP, which is essential for recognition of the pre-mRNA 5' splice-site and the subsequent assembly of the spliceosome. SNRPC/U1-C is directly involved in initial 5' splice-site recognition for both constitutive and regulated alternative splicing. The interaction with the 5' splice-site seems to precede base-pairing between the pre-mRNA and the U1 snRNA. Stimulates commitment or early (E) complex formation by stabilizing the base pairing of the 5' end of the U1 snRNA and the 5' splice-site region. This is U1 small nuclear ribonucleoprotein C from Rattus norvegicus (Rat).